Reading from the N-terminus, the 179-residue chain is MASQNVDPAAASSVASRKGQESGTSAARGSVGKRLQQELMTLMMSGDKGISAFPESDNLFKWIGTIDGAVGTVYEDLRYKLSLEFPSGYPYNAPTVKFVTPCFHPNVDSHGNICLDILKDKWSALYDVRTILLSLQSLLGEPNNESPLNPYAAELWQNQTAYKKHLHEQYQKQVREKEI.

Positions 1 to 31 are disordered; sequence MASQNVDPAAASSVASRKGQESGTSAARGSV. The UBC core domain maps to 30–179; that stretch reads SVGKRLQQEL…YQKQVREKEI (150 aa). The active-site Glycyl thioester intermediate is the Cys114.

Belongs to the ubiquitin-conjugating enzyme family. Component of the APC/C complex. Autoubiquitinated by the APC/C complex, leading to its degradation by the proteasome.

It carries out the reaction S-ubiquitinyl-[E1 ubiquitin-activating enzyme]-L-cysteine + [E2 ubiquitin-conjugating enzyme]-L-cysteine = [E1 ubiquitin-activating enzyme]-L-cysteine + S-ubiquitinyl-[E2 ubiquitin-conjugating enzyme]-L-cysteine.. The enzyme catalyses S-ubiquitinyl-[E1 ubiquitin-activating enzyme]-L-cysteine + [acceptor protein]-L-lysine = [E1 ubiquitin-activating enzyme]-L-cysteine + N(6)-monoubiquitinyl-[acceptor protein]-L-lysine.. Its pathway is protein modification; protein ubiquitination. In terms of biological role, catalyzes the covalent attachment of ubiquitin to other proteins. Acts as an essential factor of the anaphase promoting complex/cyclosome (APC/C), a cell cycle-regulated ubiquitin ligase that controls progression through mitosis. Acts by initiating 'Lys-11'-linked polyubiquitin chains on APC/C substrates, leading to the degradation of APC/C substrates by the proteasome and promoting mitotic exit. The chain is Ubiquitin-conjugating enzyme E2 C (ube2c) from Xenopus laevis (African clawed frog).